The chain runs to 141 residues: HTH-type transcriptional repressor NsrR (141 aa).

The HTH rrf2-type domain maps to 2-129 (QLTSFTDYAL…DDCTIEELLS (128 aa)). Positions 28–51 (ITEVTDLFGVSRNHMVKVINRLGQ) form a DNA-binding region, H-T-H motif. Residues C91, C96, and C102 each coordinate [2Fe-2S] cluster.

[2Fe-2S] cluster is required as a cofactor.

Its function is as follows. Nitric oxide-sensitive repressor of genes involved in protecting the cell against nitrosative stress. May require iron for activity. The chain is HTH-type transcriptional repressor NsrR from Vibrio campbellii (strain ATCC BAA-1116).